The chain runs to 172 residues: NAD(P)H-quinone oxidoreductase subunit I, chloroplastic (172 aa).

4Fe-4S ferredoxin-type domains lie at 55–84 (GRIH…VDWK) and 95–124 (LNYS…MTEE). [4Fe-4S] cluster contacts are provided by Cys-64, Cys-67, Cys-70, Cys-74, Cys-104, Cys-107, Cys-110, and Cys-114.

It belongs to the complex I 23 kDa subunit family. As to quaternary structure, NDH is composed of at least 16 different subunits, 5 of which are encoded in the nucleus. [4Fe-4S] cluster is required as a cofactor.

It localises to the plastid. The protein resides in the chloroplast thylakoid membrane. The catalysed reaction is a plastoquinone + NADH + (n+1) H(+)(in) = a plastoquinol + NAD(+) + n H(+)(out). It catalyses the reaction a plastoquinone + NADPH + (n+1) H(+)(in) = a plastoquinol + NADP(+) + n H(+)(out). NDH shuttles electrons from NAD(P)H:plastoquinone, via FMN and iron-sulfur (Fe-S) centers, to quinones in the photosynthetic chain and possibly in a chloroplast respiratory chain. The immediate electron acceptor for the enzyme in this species is believed to be plastoquinone. Couples the redox reaction to proton translocation, and thus conserves the redox energy in a proton gradient. This is NAD(P)H-quinone oxidoreductase subunit I, chloroplastic from Arabidopsis thaliana (Mouse-ear cress).